The sequence spans 502 residues: Glutamate--tRNA ligase (502 aa).

The 'HIGH' region motif lies at 21–31 (PSPTGVPHVGM). A 'KMSKS' region motif is present at residues 265–269 (KLSKR). K268 contacts ATP.

The protein belongs to the class-I aminoacyl-tRNA synthetase family. Glutamate--tRNA ligase type 1 subfamily. As to quaternary structure, monomer.

It localises to the cytoplasm. The catalysed reaction is tRNA(Glu) + L-glutamate + ATP = L-glutamyl-tRNA(Glu) + AMP + diphosphate. Functionally, catalyzes the attachment of glutamate to tRNA(Glu) in a two-step reaction: glutamate is first activated by ATP to form Glu-AMP and then transferred to the acceptor end of tRNA(Glu). The protein is Glutamate--tRNA ligase of Mycobacterium leprae (strain TN).